The following is a 521-amino-acid chain: Bifunctional purine biosynthesis protein PurH (521 aa).

In terms of domain architecture, MGS-like spans 1 to 145; that stretch reads MIKQALISVS…KNHRDVTVVV (145 aa).

This sequence belongs to the PurH family.

It catalyses the reaction (6R)-10-formyltetrahydrofolate + 5-amino-1-(5-phospho-beta-D-ribosyl)imidazole-4-carboxamide = 5-formamido-1-(5-phospho-D-ribosyl)imidazole-4-carboxamide + (6S)-5,6,7,8-tetrahydrofolate. The enzyme catalyses IMP + H2O = 5-formamido-1-(5-phospho-D-ribosyl)imidazole-4-carboxamide. Its pathway is purine metabolism; IMP biosynthesis via de novo pathway; 5-formamido-1-(5-phospho-D-ribosyl)imidazole-4-carboxamide from 5-amino-1-(5-phospho-D-ribosyl)imidazole-4-carboxamide (10-formyl THF route): step 1/1. It functions in the pathway purine metabolism; IMP biosynthesis via de novo pathway; IMP from 5-formamido-1-(5-phospho-D-ribosyl)imidazole-4-carboxamide: step 1/1. The protein is Bifunctional purine biosynthesis protein PurH of Burkholderia pseudomallei (strain 1106a).